Consider the following 62-residue polypeptide: UPF0434 protein ABO_2103 (62 aa).

Belongs to the UPF0434 family.

The protein is UPF0434 protein ABO_2103 of Alcanivorax borkumensis (strain ATCC 700651 / DSM 11573 / NCIMB 13689 / SK2).